The chain runs to 428 residues: Gamma-glutamyl phosphate reductase (428 aa).

This sequence belongs to the gamma-glutamyl phosphate reductase family.

It localises to the cytoplasm. The catalysed reaction is L-glutamate 5-semialdehyde + phosphate + NADP(+) = L-glutamyl 5-phosphate + NADPH + H(+). It participates in amino-acid biosynthesis; L-proline biosynthesis; L-glutamate 5-semialdehyde from L-glutamate: step 2/2. In terms of biological role, catalyzes the NADPH-dependent reduction of L-glutamate 5-phosphate into L-glutamate 5-semialdehyde and phosphate. The product spontaneously undergoes cyclization to form 1-pyrroline-5-carboxylate. The chain is Gamma-glutamyl phosphate reductase from Hyphomonas neptunium (strain ATCC 15444).